We begin with the raw amino-acid sequence, 128 residues long: MSEIPAELRYASSHEWAKVEDGVATVGISDHAQDAMGDLVYVELPEVGQVVAAGDETGVVESVKAASDIYSPVSGEIVEINEALEDEPELVNNVPYEGGWLFKVQLTDEGELDSLLTADQYQAQIDSE.

The Lipoyl-binding domain occupies 23–105 (VATVGISDHA…YEGGWLFKVQ (83 aa)). An N6-lipoyllysine modification is found at Lys-64.

This sequence belongs to the GcvH family. The glycine cleavage system is composed of four proteins: P, T, L and H. It depends on (R)-lipoate as a cofactor.

Its function is as follows. The glycine cleavage system catalyzes the degradation of glycine. The H protein shuttles the methylamine group of glycine from the P protein to the T protein. This chain is Glycine cleavage system H protein, found in Alcanivorax borkumensis (strain ATCC 700651 / DSM 11573 / NCIMB 13689 / SK2).